A 720-amino-acid chain; its full sequence is Glutaryl-7-aminocephalosporanic-acid acylase (720 aa).

An N-terminal signal peptide occupies residues Met-1 to Ala-29. The propeptide at Asp-190–Gly-198 is spacer peptide. Catalysis depends on Ser-199, which acts as the Nucleophile. Catalysis depends on residues His-221 and Glu-653.

The protein belongs to the peptidase S45 family. Heterotetramer of two alpha and two beta subunits processed from the same precursor.

The protein localises to the periplasm. It carries out the reaction (7R)-7-(4-carboxybutanamido)cephalosporanate + H2O = (7R)-7-aminocephalosporanate + glutarate. Its function is as follows. Catalyzes the deacylation of 7 beta-(4-carboxybutanamido)cephalosporanic acid (glutaryl-7-aminocephalosporanic acid or GL-7-ACA) to 7-aminocephalosporanic acid (7-ACA). The protein is Glutaryl-7-aminocephalosporanic-acid acylase of Pseudomonas sp. (strain SY-77).